Here is a 254-residue protein sequence, read N- to C-terminus: Alcohol dehydrogenase 2 (254 aa).

NAD(+) is bound at residue 10–33 (FVAGLGGIGFDTSREIVKSGPKNL). Residue serine 138 coordinates substrate. The active-site Proton acceptor is tyrosine 151.

This sequence belongs to the short-chain dehydrogenases/reductases (SDR) family. As to quaternary structure, homodimer.

The enzyme catalyses a primary alcohol + NAD(+) = an aldehyde + NADH + H(+). The catalysed reaction is a secondary alcohol + NAD(+) = a ketone + NADH + H(+). The sequence is that of Alcohol dehydrogenase 2 (Adh2) from Drosophila buzzatii (Fruit fly).